Consider the following 151-residue polypeptide: Phosphopantetheine adenylyltransferase (151 aa).

S9 is a substrate binding site. ATP contacts are provided by residues 9-10 (SF) and H17. Substrate contacts are provided by K41, T73, and R87. ATP contacts are provided by residues 88–90 (GLR), E98, and 122–128 (TSFISSS).

The protein belongs to the bacterial CoaD family. Homohexamer. The cofactor is Mg(2+).

Its subcellular location is the cytoplasm. It catalyses the reaction (R)-4'-phosphopantetheine + ATP + H(+) = 3'-dephospho-CoA + diphosphate. The protein operates within cofactor biosynthesis; coenzyme A biosynthesis; CoA from (R)-pantothenate: step 4/5. Functionally, reversibly transfers an adenylyl group from ATP to 4'-phosphopantetheine, yielding dephospho-CoA (dPCoA) and pyrophosphate. This is Phosphopantetheine adenylyltransferase from Flavobacterium psychrophilum (strain ATCC 49511 / DSM 21280 / CIP 103535 / JIP02/86).